The chain runs to 432 residues: MADKLPYKVADIGLAAWGRKALDIAENEMPGLMRMREMYSASKPLKGARIAGCLHMTVETAVLIETLVALGAEVRWSSCNIFSTQDHAAAAIAKAGIPVFAWKGETDEEYLWCIEQTLHFKDGPLNMILDDGGDLTNLIHTKHPQLLSGIRGISEETTTGVHNLYKMMANGILKVPAINVNDSVTKSKFDNLYGCRESLIDGIKRATDVMIAGKVAVVAGYGDVGKGCAQALRGFGARVIITEIDPINALQAAMEGYEVTTMDEACKEGNIFVTTTGCVDIILGRHFEQMKDDAIVCNIGHFDVEIDVKWLNENAVEKVNIKPQVDRYLLKNGHRIILLAEGRLVNLGCAMGHPSFVMSNSFTNQVMAQIELWTHPDKYPVGVHFLPKKLDEAVAEAHLGKLNVKLTKLTEKQAQYLGMPINGPFKPDHYRY.

Substrate is bound by residues threonine 57, aspartate 131, and glutamate 156. 157–159 (TTT) contributes to the NAD(+) binding site. Serine 183 carries the post-translational modification Phosphoserine. Lysine 186 and aspartate 190 together coordinate substrate. The residue at position 186 (lysine 186) is an N6-(2-hydroxyisobutyryl)lysine. Tyrosine 193 carries the post-translational modification Phosphotyrosine. Residues 222-227 (GDVGKG), glutamate 243, asparagine 248, 299-301 (IGH), asparagine 346, histidine 353, lysine 426, 426-430 (KPDHY), and tyrosine 430 each bind NAD(+).

This sequence belongs to the adenosylhomocysteinase family. As to quaternary structure, homotetramer. Interaction with AHCYL1. Requires NAD(+) as cofactor.

It localises to the cytoplasm. Its subcellular location is the melanosome. The protein resides in the nucleus. The protein localises to the endoplasmic reticulum. It carries out the reaction S-adenosyl-L-homocysteine + H2O = L-homocysteine + adenosine. It functions in the pathway amino-acid biosynthesis; L-homocysteine biosynthesis; L-homocysteine from S-adenosyl-L-homocysteine: step 1/1. Catalyzes the hydrolysis of S-adenosyl-L-homocysteine to form adenosine and homocysteine. Binds copper ions. This is Adenosylhomocysteinase (Ahcy) from Rattus norvegicus (Rat).